The chain runs to 86 residues: Large ribosomal subunit protein eL43 (86 aa).

The segment at 38–60 adopts a C4-type zinc-finger fold; that stretch reads CPFCGHKGKVYRLSTGVWACKKC.

This sequence belongs to the eukaryotic ribosomal protein eL43 family. Zn(2+) is required as a cofactor.

This chain is Large ribosomal subunit protein eL43, found in Desulfurococcus amylolyticus (strain DSM 18924 / JCM 16383 / VKM B-2413 / 1221n) (Desulfurococcus kamchatkensis).